The primary structure comprises 228 residues: Ribulose-phosphate 3-epimerase (228 aa).

S9 is a substrate binding site. 3 residues coordinate a divalent metal cation: H34, D36, and H70. The Proton acceptor role is filled by D36. Residues H70, 146 to 149, 175 to 177, and 197 to 198 each bind substrate; these read GKGG, DGG, and GT. D175 contacts a divalent metal cation. Catalysis depends on D175, which acts as the Proton donor.

It belongs to the ribulose-phosphate 3-epimerase family. Co(2+) serves as cofactor. Fe(2+) is required as a cofactor. Requires Mn(2+) as cofactor. It depends on Zn(2+) as a cofactor.

It carries out the reaction D-ribulose 5-phosphate = D-xylulose 5-phosphate. The protein operates within carbohydrate degradation; pentose phosphate pathway; D-xylulose 5-phosphate from D-ribulose 5-phosphate (non-oxidative stage): step 1/1. In terms of biological role, catalyzes the reversible epimerization of D-ribulose 5-phosphate to D-xylulose 5-phosphate. This chain is Ribulose-phosphate 3-epimerase, found in Schizosaccharomyces pombe (strain 972 / ATCC 24843) (Fission yeast).